Consider the following 184-residue polypeptide: 3-hydroxydecanoyl-[acyl-carrier-protein] dehydratase (184 aa).

The active site involves His-77.

The protein belongs to the thioester dehydratase family. FabA subfamily. Homodimer.

Its subcellular location is the cytoplasm. The catalysed reaction is a (3R)-hydroxyacyl-[ACP] = a (2E)-enoyl-[ACP] + H2O. It carries out the reaction (3R)-hydroxydecanoyl-[ACP] = (2E)-decenoyl-[ACP] + H2O. It catalyses the reaction (2E)-decenoyl-[ACP] = (3Z)-decenoyl-[ACP]. It functions in the pathway lipid metabolism; fatty acid biosynthesis. Functionally, necessary for the introduction of cis unsaturation into fatty acids. Catalyzes the dehydration of (3R)-3-hydroxydecanoyl-ACP to E-(2)-decenoyl-ACP and then its isomerization to Z-(3)-decenoyl-ACP. Can catalyze the dehydratase reaction for beta-hydroxyacyl-ACPs with saturated chain lengths up to 16:0, being most active on intermediate chain length. The sequence is that of 3-hydroxydecanoyl-[acyl-carrier-protein] dehydratase from Hyphomonas neptunium (strain ATCC 15444).